We begin with the raw amino-acid sequence, 288 residues long: Ribosomal protein L11 methyltransferase (288 aa).

Threonine 141, glycine 164, aspartate 186, and asparagine 227 together coordinate S-adenosyl-L-methionine.

It belongs to the methyltransferase superfamily. PrmA family.

It localises to the cytoplasm. It catalyses the reaction L-lysyl-[protein] + 3 S-adenosyl-L-methionine = N(6),N(6),N(6)-trimethyl-L-lysyl-[protein] + 3 S-adenosyl-L-homocysteine + 3 H(+). In terms of biological role, methylates ribosomal protein L11. This is Ribosomal protein L11 methyltransferase from Myxococcus xanthus (strain DK1622).